Here is a 322-residue protein sequence, read N- to C-terminus: tRNA dimethylallyltransferase (322 aa).

21-28 lines the ATP pocket; it reads GQTAVGKT. Substrate is bound at residue 23–28; the sequence is TAVGKT. Positions 46-49 are interaction with substrate tRNA; it reads DSGC.

It belongs to the IPP transferase family. As to quaternary structure, monomer. It depends on Mg(2+) as a cofactor.

The enzyme catalyses adenosine(37) in tRNA + dimethylallyl diphosphate = N(6)-dimethylallyladenosine(37) in tRNA + diphosphate. Catalyzes the transfer of a dimethylallyl group onto the adenine at position 37 in tRNAs that read codons beginning with uridine, leading to the formation of N6-(dimethylallyl)adenosine (i(6)A). The polypeptide is tRNA dimethylallyltransferase (Wigglesworthia glossinidia brevipalpis).